Here is a 157-residue protein sequence, read N- to C-terminus: Endoribonuclease YbeY (157 aa).

Zn(2+) is bound by residues His-111, His-115, and His-121.

Belongs to the endoribonuclease YbeY family. Requires Zn(2+) as cofactor.

It is found in the cytoplasm. Single strand-specific metallo-endoribonuclease involved in late-stage 70S ribosome quality control and in maturation of the 3' terminus of the 16S rRNA. In Pseudomonas putida (strain ATCC 47054 / DSM 6125 / CFBP 8728 / NCIMB 11950 / KT2440), this protein is Endoribonuclease YbeY.